A 321-amino-acid chain; its full sequence is Sideroflexin-3 (321 aa).

Methionine 1 is subject to N-acetylmethionine. The next 4 helical transmembrane spans lie at 146-164 (LGMA…ALGL), 174-194 (LVGR…NIPL), 226-246 (FQVV…PPVI), and 266-286 (LQMG…CALF).

The protein belongs to the sideroflexin family.

It localises to the mitochondrion membrane. It catalyses the reaction L-serine(in) = L-serine(out). Functionally, mitochondrial serine transporter that mediates transport of serine into mitochondria, an important step of the one-carbon metabolism pathway. Mitochondrial serine is converted to glycine and formate, which then exits to the cytosol where it is used to generate the charged folates that serve as one-carbon donors. The protein is Sideroflexin-3 (SFXN3) of Bos taurus (Bovine).